A 276-amino-acid chain; its full sequence is MDADSLLLSLELASGSGQGLSPDRRASLLTSLMLVKRDYRFARVLFWGRILGLVADYYIAQGLSEDQLAPRKTLYSLNCTEWSLLPPATEEMAMQISVVSGRFMGDPSHEYEHTELQKVNEGEKVFDEEVVVQIKEETRLVSIIDQIDKAVAIIPRGALFKTPFGVTHVNRTFEGLPLSEVRKLSSYFHFREAIDLKNKTLLEKSDLEPSLDFLDSLEYDIPRGSWSIQMERGNALVVLRSLLWPGLTFYHAPRTKNYGYIYVGTGEKNMDLPFML.

The protein belongs to the flagellar radial spoke RSP9 family. As to quaternary structure, component of the axonemal radial spoke 1 (RS1) and 2 (RS2) complexes, at least composed of spoke head proteins RSPH1, RSPH3, RSPH9 and the cilia-specific component RSPH4A or sperm-specific component RSPH6A, spoke stalk proteins RSPH14, DNAJB13, DYDC1, ROPN1L and NME5, and the RS1 complex-specific anchor protein IQUB. Interacts with IQUB. Interacts with RSPH3B. Interacts with RSPH4A. Interacts with RSPH6A. Interacts with CFAP61. Interacts with LRRC23. Expressed in the testis, trachea, lung, oviduct and ependymal cells (at protein level).

The protein localises to the cytoplasm. The protein resides in the cytoskeleton. It is found in the cilium axoneme. It localises to the flagellum axoneme. Its subcellular location is the cell projection. The protein localises to the kinocilium. Functions as part of axonemal radial spoke complexes that play an important part in the motility of sperm and cilia. Essential for both the radial spoke head assembly and the central pair microtubule stability in ependymal motile cilia. Required for motility of olfactory and neural cilia and for the structural integrity of ciliary axonemes in both 9+0 and 9+2 motile cilia. The protein is Radial spoke head protein 9 homolog (Rsph9) of Mus musculus (Mouse).